We begin with the raw amino-acid sequence, 355 residues long: Holliday junction branch migration complex subunit RuvB (355 aa).

The tract at residues 4-190 is large ATPase domain (RuvB-L); sequence TDKLAAERII…FGIVARLEFY (187 aa). ATP is bound by residues Leu-29, Arg-30, Gly-71, Lys-74, Thr-75, Thr-76, 137 to 139, Arg-180, Tyr-190, and Arg-227; that span reads EDY. Thr-75 lines the Mg(2+) pocket. Residues 191–261 form a small ATPAse domain (RuvB-S) region; the sequence is DADQLARIVR…VADAALAMLD (71 aa). The interval 264–355 is head domain (RuvB-H); that stretch reads PVGFDLMDRK…RGMWDTPAGK (92 aa). DNA-binding residues include Arg-300, Arg-319, and Arg-324.

The protein belongs to the RuvB family. In terms of assembly, homohexamer. Forms an RuvA(8)-RuvB(12)-Holliday junction (HJ) complex. HJ DNA is sandwiched between 2 RuvA tetramers; dsDNA enters through RuvA and exits via RuvB. An RuvB hexamer assembles on each DNA strand where it exits the tetramer. Each RuvB hexamer is contacted by two RuvA subunits (via domain III) on 2 adjacent RuvB subunits; this complex drives branch migration. In the full resolvosome a probable DNA-RuvA(4)-RuvB(12)-RuvC(2) complex forms which resolves the HJ.

The protein resides in the cytoplasm. The catalysed reaction is ATP + H2O = ADP + phosphate + H(+). Its function is as follows. The RuvA-RuvB-RuvC complex processes Holliday junction (HJ) DNA during genetic recombination and DNA repair, while the RuvA-RuvB complex plays an important role in the rescue of blocked DNA replication forks via replication fork reversal (RFR). RuvA specifically binds to HJ cruciform DNA, conferring on it an open structure. The RuvB hexamer acts as an ATP-dependent pump, pulling dsDNA into and through the RuvAB complex. RuvB forms 2 homohexamers on either side of HJ DNA bound by 1 or 2 RuvA tetramers; 4 subunits per hexamer contact DNA at a time. Coordinated motions by a converter formed by DNA-disengaged RuvB subunits stimulates ATP hydrolysis and nucleotide exchange. Immobilization of the converter enables RuvB to convert the ATP-contained energy into a lever motion, pulling 2 nucleotides of DNA out of the RuvA tetramer per ATP hydrolyzed, thus driving DNA branch migration. The RuvB motors rotate together with the DNA substrate, which together with the progressing nucleotide cycle form the mechanistic basis for DNA recombination by continuous HJ branch migration. Branch migration allows RuvC to scan DNA until it finds its consensus sequence, where it cleaves and resolves cruciform DNA. This is Holliday junction branch migration complex subunit RuvB from Burkholderia ambifaria (strain ATCC BAA-244 / DSM 16087 / CCUG 44356 / LMG 19182 / AMMD) (Burkholderia cepacia (strain AMMD)).